The chain runs to 185 residues: Ribosome-recycling factor (185 aa).

It belongs to the RRF family.

It is found in the cytoplasm. In terms of biological role, responsible for the release of ribosomes from messenger RNA at the termination of protein biosynthesis. May increase the efficiency of translation by recycling ribosomes from one round of translation to another. The chain is Ribosome-recycling factor from Geobacillus thermodenitrificans (strain NG80-2).